A 245-amino-acid polypeptide reads, in one-letter code: Enolase-phosphatase E1 (245 aa).

2 residues coordinate Mg(2+): Asp14 and Glu16. Substrate is bound by residues Ser141 to Ser142 and Lys175. Asp200 is a Mg(2+) binding site.

This sequence belongs to the HAD-like hydrolase superfamily. MasA/MtnC family. Monomer. Mg(2+) is required as a cofactor.

It localises to the cytoplasm. The protein localises to the nucleus. The catalysed reaction is 5-methylsulfanyl-2,3-dioxopentyl phosphate + H2O = 1,2-dihydroxy-5-(methylsulfanyl)pent-1-en-3-one + phosphate. It participates in amino-acid biosynthesis; L-methionine biosynthesis via salvage pathway; L-methionine from S-methyl-5-thio-alpha-D-ribose 1-phosphate: step 3/6. It functions in the pathway amino-acid biosynthesis; L-methionine biosynthesis via salvage pathway; L-methionine from S-methyl-5-thio-alpha-D-ribose 1-phosphate: step 4/6. Its function is as follows. Bifunctional enzyme that catalyzes the enolization of 2,3-diketo-5-methylthiopentyl-1-phosphate (DK-MTP-1-P) into the intermediate 2-hydroxy-3-keto-5-methylthiopentenyl-1-phosphate (HK-MTPenyl-1-P), which is then dephosphorylated to form the acireductone 1,2-dihydroxy-3-keto-5-methylthiopentene (DHK-MTPene). This chain is Enolase-phosphatase E1, found in Drosophila grimshawi (Hawaiian fruit fly).